Reading from the N-terminus, the 309-residue chain is Taste receptor type 2 member 43 (309 aa).

Residue methionine 1 is a topological domain, extracellular. The helical transmembrane segment at 2-22 (ITFLPIIFSSLVVVTFVIGNF) threads the bilayer. Topologically, residues 23-46 (ANGFIALVNSIEWFKRQKISFADQ) are cytoplasmic. A helical membrane pass occupies residues 47–67 (ILTALAVSRVGLLWVLLLNWY). At 68 to 86 (LTVLNPAFNSVEVRTTAYN) the chain is on the extracellular side. Residues 87-107 (IWAVINHFSNWLATSLSIFYL) form a helical membrane-spanning segment. The Cytoplasmic portion of the chain corresponds to 108 to 126 (LKIANFSNFIFLHLKRRVK). A helical membrane pass occupies residues 127-147 (SVILVMLLGPLLFLACHLFMI). The Extracellular portion of the chain corresponds to 148-178 (NMNEIVRTKEFDGNMTWKIKLKSAMYFSNMT). Residues asparagine 161 and asparagine 176 are each glycosylated (N-linked (GlcNAc...) asparagine). Residues 179 to 199 (VTMVANLVPFTLTLLSFLLLI) traverse the membrane as a helical segment. Residues 200 to 229 (CSLCKHLKKMQLHGKGSQDPSTKVHIKALQ) are Cytoplasmic-facing. Residues 230-250 (TVISFLLLCAIYFLSIMISVW) traverse the membrane as a helical segment. Topologically, residues 251–259 (SFGSLENKP) are extracellular. The chain crosses the membrane as a helical span at residues 260 to 280 (VFMFCKAIRFSYPSIHPFILI). Topologically, residues 281–309 (WGNKKLKQTFLSVFWQMRYWVKGEKTSSP) are cytoplasmic.

It belongs to the G-protein coupled receptor T2R family.

Its subcellular location is the membrane. It is found in the cell projection. The protein localises to the cilium membrane. Its function is as follows. Gustducin-coupled receptor immplicated in the perception of bitter compounds in the oral cavity and the gastrointestinal tract. Signals through PLCB2 and the calcium-regulated cation channel TRPM5. Activated by the sulfonyl amide sweeteners saccharin and acesulfame K. In airway epithelial cells, binding of bitter compounds increases the intracellular calcium ion concentration and stimulates ciliary beat frequency. May act as chemosensory receptors in airway epithelial cells to detect and eliminate potential noxious agents from the airways. This is Taste receptor type 2 member 43 (TAS2R43) from Pan paniscus (Pygmy chimpanzee).